We begin with the raw amino-acid sequence, 478 residues long: NAD(+) hydrolase ThsA (478 aa).

The Deacetylase sirtuin-type domain maps to 1–287; the sequence is MDKKVLIKRF…SIRKKYLRKT (287 aa). A19, D110, and H148 together coordinate NAD(+). Residue H148 is the Proton acceptor of the active site. Residues 288 to 478 are SLOG (STALD) domain; sequence IFISGSAVDY…VSLINSIQED (191 aa). 3'cADPR contacts are provided by G292, S293, L330, R373, K390, G401, and E405.

It belongs to the soluble Thoeris ThsA family. Homotetramer in solution.

The enzyme catalyses NAD(+) + H2O = ADP-D-ribose + nicotinamide + H(+). Activated by 3'cADPR. In terms of biological role, NAD(+) hydrolyzing component (NADase) of the Thoeris antiviral defense system, composed of ThsA and ThsB (maybe AS248_15445). Activated by 3' cyclic ADP-D-ribose (3'cADPR) but not its isomers 2'cADPR, cADPR and very weakly by ADPR; binds 3'cADPR better than 2'cADPR. Upon activation binds and hydrolyzes NAD(+), leading to cell death and inhibition of phage replication. The sequence is that of NAD(+) hydrolase ThsA from Enterococcus faecium (Streptococcus faecium).